Consider the following 331-residue polypeptide: 4-hydroxythreonine-4-phosphate dehydrogenase (331 aa).

Substrate-binding residues include H136 and T137. A divalent metal cation contacts are provided by H166, H211, and H266. Substrate is bound by residues K274, N283, and R292.

The protein belongs to the PdxA family. In terms of assembly, homodimer. Zn(2+) is required as a cofactor. The cofactor is Mg(2+). Requires Co(2+) as cofactor.

The protein resides in the cytoplasm. It catalyses the reaction 4-(phosphooxy)-L-threonine + NAD(+) = 3-amino-2-oxopropyl phosphate + CO2 + NADH. The protein operates within cofactor biosynthesis; pyridoxine 5'-phosphate biosynthesis; pyridoxine 5'-phosphate from D-erythrose 4-phosphate: step 4/5. In terms of biological role, catalyzes the NAD(P)-dependent oxidation of 4-(phosphooxy)-L-threonine (HTP) into 2-amino-3-oxo-4-(phosphooxy)butyric acid which spontaneously decarboxylates to form 3-amino-2-oxopropyl phosphate (AHAP). The protein is 4-hydroxythreonine-4-phosphate dehydrogenase of Thioalkalivibrio sulfidiphilus (strain HL-EbGR7).